Consider the following 641-residue polypeptide: MRKKEGRTMIEIKDLWYTYPGRTEPTLKGVNLKIEEGEFVLLTGPTGCGKSTLLKTLNGIIPHESGGVFSGSIRVNGIETRNSNQMELSSAVGLVFQNPDDQIFSTSVEDEVAFGPENLCLDREEIDKKVEEALRMVGMAEHRLDSTNALSGGQKQRICIASMLAMMPEILAMDEPVSQMDPLGTREILNTVRELNRELKITILLVEHRLHELMSFADRVVIMDGGKIVLDQPTSKAFDYIEVFHRLGLRVPEPVELCHTLGIKASPLSAEEALAVLGAGNCKEKVKTPRNFSNPEEETGRRTDPAERNEFVNTGSGNIKYGDNRSENKGSENRDSIISIRDLWSGYEKNRMVLKGINLEIRKGERVAIMGTNGSGKSTLLLNLAAMLKPYKGSVKVFGGDIQPRNSYSFAGRVGFVFQNPDLMLFCDSVDEEARFGPFQLKYKDIEERTKTSLEAMSILDLRQDLPQSLSRGQRLRTAVASVLSIDPEIILLDEPTTGQDRVNIEHMMNYFKDNCSTLVFCTHDIEIAMLYATRLLVMDDGRIIADGKGREVIKNIEILKQASLTQPPVVEIANYLGVDAISITELVEVLTRRSSEVKKDDGENYERMSSELTNSELADSGVVNSELADSGVVNSEGIKC.

Residues 10 to 250 (IEIKDLWYTY…IEVFHRLGLR (241 aa)) form the ABC transporter 1 domain. 44–51 (GPTGCGKS) contacts ATP. The tract at residues 286-332 (VKTPRNFSNPEEETGRRTDPAERNEFVNTGSGNIKYGDNRSENKGSE) is disordered. Composition is skewed to basic and acidic residues over residues 298–310 (ETGR…ERNE) and 322–332 (GDNRSENKGSE). The ABC transporter 2 domain occupies 338–566 (ISIRDLWSGY…IEILKQASLT (229 aa)). ATP is bound at residue 371–378 (GTNGSGKS).

Belongs to the ABC transporter superfamily.

It is found in the cell membrane. Functionally, probably part of an ABC transporter complex. Responsible for energy coupling to the transport system. The sequence is that of Putative ABC transporter ATP-binding protein MA_0870 from Methanosarcina acetivorans (strain ATCC 35395 / DSM 2834 / JCM 12185 / C2A).